The sequence spans 504 residues: Glucose-6-phosphate isomerase (504 aa).

The active-site Proton donor is E333. Active-site residues include H364 and K473.

Belongs to the GPI family.

It is found in the cytoplasm. It catalyses the reaction alpha-D-glucose 6-phosphate = beta-D-fructose 6-phosphate. Its pathway is carbohydrate biosynthesis; gluconeogenesis. It functions in the pathway carbohydrate degradation; glycolysis; D-glyceraldehyde 3-phosphate and glycerone phosphate from D-glucose: step 2/4. Its function is as follows. Catalyzes the reversible isomerization of glucose-6-phosphate to fructose-6-phosphate. This is Glucose-6-phosphate isomerase from Xanthomonas oryzae pv. oryzae (strain KACC10331 / KXO85).